A 534-amino-acid chain; its full sequence is Peptide chain release factor 3 (534 aa).

A tr-type G domain is found at 9–278 (ARRRTFAIIS…FFIEHAPPPQ (270 aa)). GTP is bound by residues 18 to 25 (SHPDAGKT), 86 to 90 (DTPGH), and 140 to 143 (NKLD).

It belongs to the TRAFAC class translation factor GTPase superfamily. Classic translation factor GTPase family. PrfC subfamily.

The protein localises to the cytoplasm. In terms of biological role, increases the formation of ribosomal termination complexes and stimulates activities of RF-1 and RF-2. It binds guanine nucleotides and has strong preference for UGA stop codons. It may interact directly with the ribosome. The stimulation of RF-1 and RF-2 is significantly reduced by GTP and GDP, but not by GMP. This Xanthomonas oryzae pv. oryzae (strain PXO99A) protein is Peptide chain release factor 3.